Consider the following 865-residue polypeptide: Xylosyltransferase 2 (865 aa).

Over 1-15 (MVASARVQKLVRRYK) the chain is Cytoplasmic. The chain crosses the membrane as a helical; Signal-anchor for type II membrane protein span at residues 16-36 (LAIATALAILLLQGLVVWSFS). Residues 37–865 (GLEEDEAGEK…GPVKADGRLR (829 aa)) are Lumenal-facing. Positions 41–157 (DEAGEKGRQR…EGAPQPTDNG (117 aa)) are disordered. A compositionally biased stretch (basic and acidic residues) spans 53–65 (RPLDPGEGSKDTD). Residues 73 to 82 (STGRRHGRWR) show a composition bias toward basic residues. Residue Asn122 is glycosylated (N-linked (GlcNAc...) asparagine). Residues 125 to 137 (GAAAGEALVGAAG) show a composition bias toward low complexity. 4 disulfides stabilise this stretch: Cys162/Cys190, Cys206/Cys448, Cys467/Cys480, and Cys469/Cys478. Residues Val239, Asp267, and 296-298 (TIW) contribute to the UDP-alpha-D-xylose site. A glycan (N-linked (GlcNAc...) asparagine) is linked at Asn327. Residue 400 to 401 (DW) coordinates UDP-alpha-D-xylose. Residues Ser481 and 504–505 (RK) contribute to the UDP-alpha-D-xylose site. 2 disulfides stabilise this stretch: Cys581–Cys833 and Cys826–Cys839. A glycan (N-linked (GlcNAc...) asparagine) is linked at Asn683. A disordered region spans residues 846–865 (SLSPDPKSELGPVKADGRLR).

This sequence belongs to the glycosyltransferase 14 family. XylT subfamily. Monomer. It depends on Mg(2+) as a cofactor. The cofactor is Mn(2+). Contains disulfide bonds.

It is found in the golgi apparatus membrane. Its subcellular location is the secreted. It catalyses the reaction UDP-alpha-D-xylose + L-seryl-[protein] = 3-O-(beta-D-xylosyl)-L-seryl-[protein] + UDP + H(+). It participates in glycan metabolism; chondroitin sulfate biosynthesis. It functions in the pathway glycan metabolism; heparan sulfate biosynthesis. Functionally, catalyzes the first step in the biosynthesis of chondroitin sulfate, heparan sulfate and dermatan sulfate proteoglycans, such as DCN. Transfers D-xylose from UDP-D-xylose to specific serine residues of the core protein. The protein is Xylosyltransferase 2 (XYLT2) of Pan troglodytes (Chimpanzee).